A 223-amino-acid polypeptide reads, in one-letter code: Nitrate reductase gamma chain (223 aa).

Residues 2-27 form a helical membrane-spanning segment; that stretch reads SGQILWGIMPYIVLTIFIGGHIYRYQ. At 28–45 the chain is on the cytoplasmic side; that stretch reads HDQFGWTAKSSELLEKKK. The chain crosses the membrane as a helical span at residues 46 to 68; that stretch reads LAAGSTLFHWGLLCVVGGHVMGI. Heme b contacts are provided by His-54 and His-64. Residues 69–81 are Extracellular-facing; it reads LIPEGVYASLGIS. Residues 82–111 form a helical membrane-spanning segment; that stretch reads EHMYHKMAIGAGLPAGIAACTGLVILTYRR. Topologically, residues 112 to 123 are cytoplasmic; that stretch reads LFDKRIRKTSSP. The helical transmembrane segment at 124–147 threads the bilayer; it reads SDILTLLLLLFMMLSGVAATFLNI. Residues 148–180 are Extracellular-facing; that stretch reads DSKGFDYRTTVGPWFREIVLFRPDASLMESVPL. Residues 181 to 196 form a helical membrane-spanning segment; the sequence is WFKFHIVIGYVVFILW. Residues His-185 and His-203 each contribute to the heme b site. Topologically, residues 197–223 are cytoplasmic; the sequence is PFTRLVHVFSLPLKYLTRSYVVYRKRS.

Heme serves as cofactor.

Its subcellular location is the cell membrane. The enzyme catalyses nitrate + a quinol = a quinone + nitrite + H2O. The gamma chain is a membrane-embedded heme-iron unit resembling cytochrome b, which transfers electrons from quinones to the beta subunit. The protein is Nitrate reductase gamma chain (narI) of Bacillus subtilis (strain 168).